The following is a 425-amino-acid chain: Kynureninase (425 aa).

Residues Leu-105, Thr-106, 133–136 (FPSD), Asp-218, His-221, and Tyr-243 contribute to the pyridoxal 5'-phosphate site. Lys-244 is subject to N6-(pyridoxal phosphate)lysine. 2 residues coordinate pyridoxal 5'-phosphate: Trp-274 and Asn-302.

It belongs to the kynureninase family. In terms of assembly, homodimer. Pyridoxal 5'-phosphate is required as a cofactor.

It catalyses the reaction L-kynurenine + H2O = anthranilate + L-alanine + H(+). The enzyme catalyses 3-hydroxy-L-kynurenine + H2O = 3-hydroxyanthranilate + L-alanine + H(+). It participates in amino-acid degradation; L-kynurenine degradation; L-alanine and anthranilate from L-kynurenine: step 1/1. It functions in the pathway cofactor biosynthesis; NAD(+) biosynthesis; quinolinate from L-kynurenine: step 2/3. In terms of biological role, catalyzes the cleavage of L-kynurenine (L-Kyn) and L-3-hydroxykynurenine (L-3OHKyn) into anthranilic acid (AA) and 3-hydroxyanthranilic acid (3-OHAA), respectively. The sequence is that of Kynureninase from Flavobacterium johnsoniae (strain ATCC 17061 / DSM 2064 / JCM 8514 / BCRC 14874 / CCUG 350202 / NBRC 14942 / NCIMB 11054 / UW101) (Cytophaga johnsonae).